We begin with the raw amino-acid sequence, 278 residues long: Bifunctional protein FolD (278 aa).

Residues 162–164 (GAG) and isoleucine 228 contribute to the NADP(+) site.

It belongs to the tetrahydrofolate dehydrogenase/cyclohydrolase family. As to quaternary structure, homodimer.

The catalysed reaction is (6R)-5,10-methylene-5,6,7,8-tetrahydrofolate + NADP(+) = (6R)-5,10-methenyltetrahydrofolate + NADPH. It catalyses the reaction (6R)-5,10-methenyltetrahydrofolate + H2O = (6R)-10-formyltetrahydrofolate + H(+). Its pathway is one-carbon metabolism; tetrahydrofolate interconversion. Functionally, catalyzes the oxidation of 5,10-methylenetetrahydrofolate to 5,10-methenyltetrahydrofolate and then the hydrolysis of 5,10-methenyltetrahydrofolate to 10-formyltetrahydrofolate. The polypeptide is Bifunctional protein FolD (Hydrogenobaculum sp. (strain Y04AAS1)).